The following is a 741-amino-acid chain: G2 and S phase-expressed protein 1 (741 aa).

Serine 73 is subject to Phosphoserine. Disordered stretches follow at residues 101 to 120, 131 to 428, and 450 to 512; these read EVAQ…ETFV, EKEQ…KTVS, and FKVP…STRR. The span at 106 to 120 shows a compositional bias: polar residues; it reads ATPQNPVNQGKETFV. Over residues 131-147 the composition is skewed to basic and acidic residues; the sequence is EKEQKRDRSPMSLKRET. Serine 139, serine 153, serine 191, and serine 245 each carry phosphoserine. Residues 173–209 show a composition bias toward polar residues; it reads SPVSAGPAQTQSNQGLPCSSQPLPRESSTSQPPSQAG. The segment covering 246 to 261 has biased composition (polar residues); it reads IQRTKLVNEKGSQSDV. Positions 310-321 are enriched in low complexity; it reads SSTSGSASSLES. Phosphoserine is present on serine 311. Over residues 337–355 the composition is skewed to polar residues; it reads QRSSIPASGSQRRTSTSKS. A compositionally biased stretch (low complexity) spans 360-372; that stretch reads PAASRQALPAAPA. Residues 398–408 are compositionally biased toward polar residues; it reads SPLTQQPQTPE. Serine 460 bears the Phosphoserine mark. Position 465 is a phosphothreonine (threonine 465). Phosphoserine occurs at positions 476, 493, 509, and 514. The segment covering 478 to 497 has biased composition (low complexity); the sequence is TPASRVVSSTPVRRSSGTTP. Phosphothreonine is present on threonine 518. Residues serine 521, serine 541, serine 582, and serine 599 each carry the phosphoserine modification. A disordered region spans residues 550-640; the sequence is LSSEPRRRST…VHGGGCSHTP (91 aa). Residues 578 to 593 are compositionally biased toward low complexity; that stretch reads QGLSSDESSSPPSSVP. Threonine 696 bears the Phosphothreonine mark. 3 positions are modified to phosphoserine: serine 720, serine 726, and serine 736.

Phosphorylated in mitosis.

It is found in the cytoplasm. Its subcellular location is the cytoskeleton. Functionally, may be involved in p53-induced cell cycle arrest in G2/M phase by interfering with microtubule rearrangements that are required to enter mitosis. Overexpression delays G2/M phase progression. This chain is G2 and S phase-expressed protein 1 (Gtse1), found in Mus musculus (Mouse).